The chain runs to 600 residues: Autophagy-related protein 22-2 (600 aa).

The segment at 1–30 (MAFASPPASPPDEDGQARAPRYPGEDTTPT) is disordered. The next 4 membrane-spanning stretches (helical) occupy residues 41–61 (YGIA…PLTL), 117–137 (SFAM…LISF), 149–168 (TLLV…FVFI), and 186–206 (CLGS…ASDP). Residues 234-257 (SFDGDEPTHRPPTGLGLGGATGTS) form a disordered region. The next 4 membrane-spanning stretches (helical) occupy residues 271 to 291 (GVGL…LLLF), 304 to 324 (TLPL…FTMV), 378 to 398 (VIVF…VSGT), and 414 to 434 (VALL…LWPI). The N-linked (GlcNAc...) asparagine glycan is linked to Asn-444. Transmembrane regions (helical) follow at residues 449–469 (VCIA…IPLF), 484–506 (YPLA…SFFG), 526–546 (KGSS…TGQV), and 549–569 (GFFF…MVDA).

It belongs to the ATG22 family.

It localises to the vacuole membrane. Vacuolar effluxer which mediate the efflux of amino acids resulting from autophagic degradation. The release of autophagic amino acids allows the maintenance of protein synthesis and viability during nitrogen starvation. This chain is Autophagy-related protein 22-2 (atg22-2), found in Aspergillus niger (strain ATCC MYA-4892 / CBS 513.88 / FGSC A1513).